The chain runs to 365 residues: Chorismate synthase (365 aa).

Residue R48 participates in NADP(+) binding. Residues 130–132 (RSS), 242–243 (NA), G290, 305–309 (KPTSS), and R331 each bind FMN.

It belongs to the chorismate synthase family. In terms of assembly, homotetramer. FMNH2 serves as cofactor.

The enzyme catalyses 5-O-(1-carboxyvinyl)-3-phosphoshikimate = chorismate + phosphate. Its pathway is metabolic intermediate biosynthesis; chorismate biosynthesis; chorismate from D-erythrose 4-phosphate and phosphoenolpyruvate: step 7/7. In terms of biological role, catalyzes the anti-1,4-elimination of the C-3 phosphate and the C-6 proR hydrogen from 5-enolpyruvylshikimate-3-phosphate (EPSP) to yield chorismate, which is the branch point compound that serves as the starting substrate for the three terminal pathways of aromatic amino acid biosynthesis. This reaction introduces a second double bond into the aromatic ring system. This is Chorismate synthase from Erythrobacter litoralis (strain HTCC2594).